The sequence spans 281 residues: Large ribosomal subunit protein uL22 (281 aa).

The tract at residues 1-225 (MASPMGSTAS…KAGGAAEAEV (225 aa)) is large ribosomal subunit protein uL22. Disordered regions lie at residues 137–175 (RATKKAVPKGARHRRRLTGAGKPAASAATETPAAQPVAA) and 199–281 (AVAS…GGTR). Basic residues predominate over residues 139 to 153 (TKKAVPKGARHRRRL). 2 stretches are compositionally biased toward low complexity: residues 159–175 (PAASAATETPAAQPVAA) and 199–239 (AVAS…APAA). Residues 226–281 (ATTDEQTTETAPAAEAEKPAVRRPAARKSTTSARRRAAETEGHDSDAESTDEGGTR) form a unknown region. Residues 261–271 (RAAETEGHDSD) are compositionally biased toward basic and acidic residues. The segment covering 272–281 (AESTDEGGTR) has biased composition (acidic residues).

It belongs to the universal ribosomal protein uL22 family. In terms of assembly, part of the 50S ribosomal subunit.

The globular domain of the protein is located near the polypeptide exit tunnel on the outside of the subunit, while an extended beta-hairpin is found that lines the wall of the exit tunnel in the center of the 70S ribosome. In terms of biological role, this protein binds specifically to 23S rRNA; its binding is stimulated by other ribosomal proteins, e.g. L4, L17, and L20. It is important during the early stages of 50S assembly. It makes multiple contacts with different domains of the 23S rRNA in the assembled 50S subunit and ribosome. The protein is Large ribosomal subunit protein uL22 of Acidothermus cellulolyticus (strain ATCC 43068 / DSM 8971 / 11B).